The sequence spans 279 residues: Peptide deformylase 1B, chloroplastic (279 aa).

Residues cysteine 177 and histidine 219 each contribute to the Fe cation site. The active site involves glutamate 220. Histidine 223 contacts Fe cation.

Belongs to the polypeptide deformylase family. Requires Fe(2+) as cofactor.

It localises to the plastid. The protein localises to the chloroplast. It carries out the reaction N-terminal N-formyl-L-methionyl-[peptide] + H2O = N-terminal L-methionyl-[peptide] + formate. Removes the formyl group from the N-terminal Met of newly synthesized proteins. The sequence is that of Peptide deformylase 1B, chloroplastic (PDF1B) from Solanum lycopersicum (Tomato).